We begin with the raw amino-acid sequence, 253 residues long: ATP synthase subunit b 2 (253 aa).

Residues 9 to 27 (VLEIVNFLVLVWLLKRFLY) traverse the membrane as a helical segment.

It belongs to the ATPase B chain family. In terms of assembly, F-type ATPases have 2 components, F(1) - the catalytic core - and F(0) - the membrane proton channel. F(1) has five subunits: alpha(3), beta(3), gamma(1), delta(1), epsilon(1). F(0) has three main subunits: a(1), b(2) and c(10-14). The alpha and beta chains form an alternating ring which encloses part of the gamma chain. F(1) is attached to F(0) by a central stalk formed by the gamma and epsilon chains, while a peripheral stalk is formed by the delta and b chains.

Its subcellular location is the cell inner membrane. Its function is as follows. F(1)F(0) ATP synthase produces ATP from ADP in the presence of a proton or sodium gradient. F-type ATPases consist of two structural domains, F(1) containing the extramembraneous catalytic core and F(0) containing the membrane proton channel, linked together by a central stalk and a peripheral stalk. During catalysis, ATP synthesis in the catalytic domain of F(1) is coupled via a rotary mechanism of the central stalk subunits to proton translocation. Functionally, component of the F(0) channel, it forms part of the peripheral stalk, linking F(1) to F(0). This Methylococcus capsulatus (strain ATCC 33009 / NCIMB 11132 / Bath) protein is ATP synthase subunit b 2.